Reading from the N-terminus, the 1204-residue chain is DNA-directed RNA polymerase subunit beta' (1204 aa).

Zn(2+) contacts are provided by Cys-60, Cys-62, Cys-75, and Cys-78. Positions 449, 451, and 453 each coordinate Mg(2+). 4 residues coordinate Zn(2+): Cys-819, Cys-893, Cys-900, and Cys-903.

Belongs to the RNA polymerase beta' chain family. The RNAP catalytic core consists of 2 alpha, 1 beta, 1 beta' and 1 omega subunit. When a sigma factor is associated with the core the holoenzyme is formed, which can initiate transcription. Mg(2+) is required as a cofactor. The cofactor is Zn(2+).

It catalyses the reaction RNA(n) + a ribonucleoside 5'-triphosphate = RNA(n+1) + diphosphate. Its function is as follows. DNA-dependent RNA polymerase catalyzes the transcription of DNA into RNA using the four ribonucleoside triphosphates as substrates. This chain is DNA-directed RNA polymerase subunit beta', found in Bacillus cytotoxicus (strain DSM 22905 / CIP 110041 / 391-98 / NVH 391-98).